We begin with the raw amino-acid sequence, 546 residues long: Amidase FG08078 (546 aa).

Active-site charge relay system residues include K129 and S204. Residue S228 is the Acyl-ester intermediate of the active site.

This sequence belongs to the amidase family.

It functions in the pathway mycotoxin biosynthesis. Its function is as follows. Amidase; part of the gene cluster that mediates the biosynthesis of butenolide, a mycotoxin that shows antibiotic activity but does not seem to play a major role in the spread of head blight in wheat. Butenolide is derived from glutamic acid via a 4-acetamido-2-butenoic acid intermediate. The predicted function of the NADH:flavin oxidoreductase FG08077, the cytochrome P450 monooxygenase FG08079, the decarboxylase FG08083, and the putative acetyltransferase FG08082 are consistent with this pathway, however, the respective activities of the butelonide biosynthesis cluster enzymes have still to be experimentally determined. This is Amidase FG08078 from Gibberella zeae (strain ATCC MYA-4620 / CBS 123657 / FGSC 9075 / NRRL 31084 / PH-1) (Wheat head blight fungus).